The following is a 430-amino-acid chain: Elongation factor Tu (430 aa).

In terms of domain architecture, tr-type G spans 13 to 220 (RPHLNIGTIG…ACDKYIALPE (208 aa)). The G1 stretch occupies residues 22–29 (GHVDHGKT). A GTP-binding site is contributed by 22-29 (GHVDHGKT). Thr-29 lines the Mg(2+) pocket. The segment at 66–70 (GITIS) is G2. The tract at residues 87–90 (DCPG) is G3. GTP contacts are provided by residues 87–91 (DCPGH) and 142–145 (NKCD). Positions 142–145 (NKCD) are G4. Residues 188–190 (SAL) are G5.

Belongs to the TRAFAC class translation factor GTPase superfamily. Classic translation factor GTPase family. EF-Tu/EF-1A subfamily. Monomer.

Its subcellular location is the cytoplasm. It carries out the reaction GTP + H2O = GDP + phosphate + H(+). Its function is as follows. GTP hydrolase that promotes the GTP-dependent binding of aminoacyl-tRNA to the A-site of ribosomes during protein biosynthesis. The sequence is that of Elongation factor Tu from Neorickettsia sennetsu (strain ATCC VR-367 / Miyayama) (Ehrlichia sennetsu).